Here is a 252-residue protein sequence, read N- to C-terminus: Pyrroloquinoline-quinone synthase (252 aa).

This sequence belongs to the PqqC family.

It carries out the reaction 6-(2-amino-2-carboxyethyl)-7,8-dioxo-1,2,3,4,7,8-hexahydroquinoline-2,4-dicarboxylate + 3 O2 = pyrroloquinoline quinone + 2 H2O2 + 2 H2O + H(+). The protein operates within cofactor biosynthesis; pyrroloquinoline quinone biosynthesis. Its function is as follows. Ring cyclization and eight-electron oxidation of 3a-(2-amino-2-carboxyethyl)-4,5-dioxo-4,5,6,7,8,9-hexahydroquinoline-7,9-dicarboxylic-acid to PQQ. In Acinetobacter baumannii (strain ACICU), this protein is Pyrroloquinoline-quinone synthase.